Here is a 183-residue protein sequence, read N- to C-terminus: Intermembrane phospholipid transport system binding protein MlaD (183 aa).

At 1–7 (MQTKKNE) the chain is on the cytoplasmic side. A helical; Signal-anchor for type II membrane protein transmembrane segment spans residues 8–28 (IWVGIFLLAALLAALFVCLKA). The Periplasmic portion of the chain corresponds to 29–183 (ANVTSIRTEP…ETTEPVGTTK (155 aa)). Positions 39–116 (TYTLYATFDN…LGEQYLALNV (78 aa)) are MCE/MlaD. The disordered stretch occupies residues 155–183 (KGDDNKNSGDAPAAAPGNNETTEPVGTTK). A compositionally biased stretch (polar residues) spans 172 to 183 (NNETTEPVGTTK).

It belongs to the MlaD family. In terms of assembly, the complex is composed of two ATP-binding proteins (MlaF), two transmembrane proteins (MlaE), two cytoplasmic solute-binding proteins (MlaB) and six periplasmic solute-binding proteins (MlaD).

It localises to the cell inner membrane. Its function is as follows. Part of the ABC transporter complex MlaFEDB, which is involved in a phospholipid transport pathway that maintains lipid asymmetry in the outer membrane by retrograde trafficking of phospholipids from the outer membrane to the inner membrane. MlaD functions in substrate binding with strong affinity for phospholipids and modulates ATP hydrolytic activity of the complex. In Escherichia coli O157:H7, this protein is Intermembrane phospholipid transport system binding protein MlaD.